The sequence spans 218 residues: Outer-membrane lipoprotein LolB (218 aa).

The signal sequence occupies residues 1 to 24 (MNNLSYLTKIPLIWVLLSVTLLSA). A lipid anchor (N-palmitoyl cysteine) is attached at Cys25. Residue Cys25 is the site of S-diacylglycerol cysteine attachment.

Belongs to the LolB family. In terms of assembly, monomer.

It localises to the cell outer membrane. Its function is as follows. Plays a critical role in the incorporation of lipoproteins in the outer membrane after they are released by the LolA protein. The chain is Outer-membrane lipoprotein LolB from Shewanella sediminis (strain HAW-EB3).